Reading from the N-terminus, the 505-residue chain is Lysine--tRNA ligase (505 aa).

Mg(2+) contacts are provided by glutamate 415 and glutamate 422.

The protein belongs to the class-II aminoacyl-tRNA synthetase family. As to quaternary structure, homodimer. Mg(2+) is required as a cofactor.

It is found in the cytoplasm. It catalyses the reaction tRNA(Lys) + L-lysine + ATP = L-lysyl-tRNA(Lys) + AMP + diphosphate. In Salmonella arizonae (strain ATCC BAA-731 / CDC346-86 / RSK2980), this protein is Lysine--tRNA ligase.